The primary structure comprises 598 residues: Elongation factor 4 (598 aa).

In terms of domain architecture, tr-type G spans 4-186; it reads SRLRNFSIIA…EIVKKIPPPK (183 aa). GTP contacts are provided by residues 16-21 and 133-136; these read DHGKST and NKID.

It belongs to the TRAFAC class translation factor GTPase superfamily. Classic translation factor GTPase family. LepA subfamily.

The protein resides in the cell inner membrane. It catalyses the reaction GTP + H2O = GDP + phosphate + H(+). Required for accurate and efficient protein synthesis under certain stress conditions. May act as a fidelity factor of the translation reaction, by catalyzing a one-codon backward translocation of tRNAs on improperly translocated ribosomes. Back-translocation proceeds from a post-translocation (POST) complex to a pre-translocation (PRE) complex, thus giving elongation factor G a second chance to translocate the tRNAs correctly. Binds to ribosomes in a GTP-dependent manner. This is Elongation factor 4 from Pelobacter propionicus (strain DSM 2379 / NBRC 103807 / OttBd1).